The primary structure comprises 175 residues: CEN-like protein 4 (175 aa).

The protein belongs to the phosphatidylethanolamine-binding protein family. In terms of tissue distribution, expressed in vegetative axillary meristems but not in the main shoot meristem.

Its subcellular location is the cytoplasm. In terms of biological role, may form complexes with phosphorylated ligands by interfering with kinases and their effectors. This is CEN-like protein 4 (CET4) from Nicotiana tabacum (Common tobacco).